A 353-amino-acid polypeptide reads, in one-letter code: Protein CEPU-1 (353 aa).

A signal peptide spans 1–28 (MAQAKMQHPVSWVIFAGMAALLLFQGVP). Ig-like C2-type domains lie at 37–124 (PKAM…PKTS), 134–216 (PKIT…VKVT), and 220–314 (PPYI…ETTT). Residues Asn-42, Asn-68, and Asn-150 are each glycosylated (N-linked (GlcNAc...) asparagine). A disulfide bond links Cys-55 and Cys-113. Cystine bridges form between Cys-155/Cys-199 and Cys-241/Cys-293. 3 N-linked (GlcNAc...) asparagine glycosylation sites follow: Asn-282, Asn-290, and Asn-303. A lipid anchor (GPI-anchor amidated serine) is attached at Ser-330. A propeptide spans 331 to 353 (GAWRRGSCAWLLALPLAQLARQF) (removed in mature form).

This sequence belongs to the immunoglobulin superfamily. IgLON family. As to quaternary structure, interacts with NEGR1. Found on the dendrites, somata and axons of developing Purkinje cells. Undetectable on other neurons like Golgi or granule cells.

Its subcellular location is the cell membrane. Functionally, it may be a cellular address molecule specific to Purkinje cells. It may represent a receptor or a subunit of a receptor complex. The polypeptide is Protein CEPU-1 (Gallus gallus (Chicken)).